We begin with the raw amino-acid sequence, 120 residues long: Seripauperin-4 (120 aa).

A helical membrane pass occupies residues 7 to 24; the sequence is IAAGVAAIAATASATTTI.

The protein belongs to the SRP1/TIP1 family. Seripauperin subfamily.

It is found in the membrane. The polypeptide is Seripauperin-4 (PAU4) (Saccharomyces cerevisiae (strain ATCC 204508 / S288c) (Baker's yeast)).